A 312-amino-acid polypeptide reads, in one-letter code: Taste receptor type 2 member 9 (312 aa).

The Extracellular portion of the chain corresponds to methionine 1 to tyrosine 9. The chain crosses the membrane as a helical span at residues isoleucine 10–cysteine 32. Over isoleucine 33–alanine 52 the chain is Cytoplasmic. Residues isoleucine 53 to phenylalanine 72 form a helical membrane-spanning segment. Over proline 73–asparagine 86 the chain is Extracellular. Residues valine 87–leucine 109 form a helical membrane-spanning segment. Residues lysine 110–lysine 128 are Cytoplasmic-facing. The chain crosses the membrane as a helical span at residues valine 129–valine 146. Over proline 147–glutamine 180 the chain is Extracellular. Residue asparagine 164 is glycosylated (N-linked (GlcNAc...) asparagine). The helical transmembrane segment at leucine 181 to phenylalanine 203 threads the bilayer. Residues serine 204 to valine 234 are Cytoplasmic-facing. A helical membrane pass occupies residues isoleucine 235 to isoleucine 257. Over proline 258–lysine 261 the chain is Extracellular. Residues leucine 262–methionine 284 traverse the membrane as a helical segment. The Cytoplasmic portion of the chain corresponds to glycine 285–proline 312.

This sequence belongs to the G-protein coupled receptor T2R family. As to expression, expressed in subsets of taste receptor cells of the tongue and palate epithelium and exclusively in gustducin-positive cells.

Its subcellular location is the membrane. Gustducin-coupled receptor implicated in the perception of bitter compounds in the oral cavity and the gastrointestinal tract. Signals through PLCB2 and the calcium-regulated cation channel TRPM5. This is Taste receptor type 2 member 9 (TAS2R9) from Homo sapiens (Human).